Here is a 467-residue protein sequence, read N- to C-terminus: Asparagine--tRNA ligase (467 aa).

This sequence belongs to the class-II aminoacyl-tRNA synthetase family. As to quaternary structure, homodimer.

The protein localises to the cytoplasm. It catalyses the reaction tRNA(Asn) + L-asparagine + ATP = L-asparaginyl-tRNA(Asn) + AMP + diphosphate + H(+). The polypeptide is Asparagine--tRNA ligase (Actinobacillus pleuropneumoniae serotype 3 (strain JL03)).